Reading from the N-terminus, the 246-residue chain is Complement C1q subcomponent subunit C (246 aa).

The signal sequence occupies residues 1–29 (MVVGPSCQPPCGLCLLLLFLLALPLRSQA). A Collagen-like domain is found at 32–113 (GCYGIPGMPG…GPPGEPGVEG (82 aa)). 5 positions are modified to 4-hydroxyproline: Pro37, Pro40, Pro43, Pro46, and Pro64. The interval 44-116 (GAPGKDGHDG…GEPGVEGRYK (73 aa)) is disordered. Lys76 bears the 5-hydroxylysine mark. An O-linked (Gal...) hydroxylysine glycan is attached at Lys76. Pro82, Pro97, Pro100, and Pro106 each carry 4-hydroxyproline. Pro residues predominate over residues 99–108 (DPGPRGPPGE). The 131-residue stretch at 116–246 (KQKHQSVFTV…VFSGFLLFPD (131 aa)) folds into the C1q domain. Cys180 and Cys194 are disulfide-bonded.

As to quaternary structure, core component of the complement C1 complex, a calcium-dependent complex composed of 1 molecule of the C1Q subcomplex, 2 molecules of C1R and 2 molecules of C1S. The C1Q subcomplex is composed 18 subunits: 3 chains of C1QA, C1QB, and C1QC trimerize to form 6 collagen-like triple helices connected to six globular ligand-recognition modules (C1q domain). O-linked glycans consist of Glc-Gal disaccharides bound to the oxygen atom of post-translationally added hydroxyl groups.

It is found in the secreted. Its subcellular location is the cell surface. The C1Q subcomplex is inhibited by sulfated molecules, such as triterpenoid sulfates, heparan sulfate, or chondroitin sulfates. Functionally, core component of the complement C1 complex, a multiprotein complex that initiates the classical pathway of the complement system, a cascade of proteins that leads to phagocytosis and breakdown of pathogens and signaling that strengthens the adaptive immune system. The classical complement pathway is initiated by the C1Q subcomplex of the C1 complex, which specifically binds IgG or IgM immunoglobulins complexed with antigens, forming antigen-antibody complexes on the surface of pathogens: C1QA, together with C1QB and C1QC, specifically recognizes and binds the Fc regions of IgG or IgM via its C1q domain. Immunoglobulin-binding activates the proenzyme C1R, which cleaves C1S, initiating the proteolytic cascade of the complement system. The C1Q subcomplex is activated by a hexamer of IgG complexed with antigens, while it is activated by a pentameric IgM. The C1Q subcomplex also recognizes and binds phosphatidylserine exposed on the surface of cells undergoing programmed cell death, possibly promoting activation of the complement system. The chain is Complement C1q subcomponent subunit C from Mus musculus (Mouse).